A 1180-amino-acid chain; its full sequence is uncharacterized protein (1180 aa).

7 disordered regions span residues 229–280 (RQQG…DTSI), 431–465 (KQPP…PPLK), 484–575 (SRDT…PNMR), 730–758 (GRPL…ASRT), 810–986 (GKAE…ASWD), 1045–1109 (RLQE…ELEM), and 1125–1152 (ERLE…QKEE). A compositionally biased stretch (acidic residues) spans 269–279 (QEDETQAEDTS). Positions 431 to 443 (KQPPKEKAHRRGA) are enriched in basic residues. Residues 486-497 (DTLSPQGSSSLP) show a composition bias toward polar residues. The segment covering 509–518 (SKARHTRVHS) has biased composition (basic residues). Basic and acidic residues-rich tracts occupy residues 730–745 (GRPL…DPEP), 826–837 (SHERDLINEAKR), and 846–856 (TKGPKSEREGK). The span at 872–889 (KAKKKLEKKTRPQRKRTQ) shows a compositional bias: basic residues. Residues 937–959 (QESQVSLDGRSSPSQIATVTGNM) are compositionally biased toward polar residues. Composition is skewed to basic and acidic residues over residues 960-986 (ESKE…ASWD), 1045-1106 (RLQE…RQEE), and 1127-1152 (LEYQ…QKEE). Residues 988 to 1171 (LRAERAEMRW…ATKQAQEQAR (184 aa)) adopt a coiled-coil conformation.

This is an uncharacterized protein from Homo sapiens (Human).